Here is an 862-residue protein sequence, read N- to C-terminus: Protein argonaute-2 (862 aa).

A PAZ domain is found at 232-351 (PVIEFMCEVL…LPLEVCNIVA (120 aa)). Interaction with guide RNA stretches follow at residues 314–319 (YFKDRH) and 527–569 (GKTP…LCLK). Positions 520–821 (LVVVILPGKT…VAFRARYHLV (302 aa)) constitute a Piwi domain. The segment at 590–593 (FQQP) is interaction with GW182 family members. Position 600 (Asp-600) interacts with a divalent metal cation. Residues 653–663 (LIQFYKSTRFK) form an interaction with GW182 family members region. Residue Asp-672 participates in a divalent metal cation binding. 3 interaction with guide RNA regions span residues 712–713 (KR), 756–764 (HAGIQGTSR), and 793–815 (YVRC…VAFR). His-810 contributes to the a divalent metal cation binding site. Residues 825–847 (HDSAEGSHTSGQSNGRDQQALAK) form a disordered region. Positions 830–841 (GSHTSGQSNGRD) are enriched in polar residues.

Belongs to the argonaute family. Ago subfamily. In terms of assembly, component of the RISC loading complex (RLC), or micro-RNA (miRNA) loading complex (miRLC), which is composed of dicer1, ago2 and tarbp2. Note that the trimeric RLC/miRLC is also referred to as RISC. Mg(2+) serves as cofactor. Mn(2+) is required as a cofactor.

Its subcellular location is the cytoplasm. The protein localises to the P-body. The catalysed reaction is Endonucleolytic cleavage to 5'-phosphomonoester.. Required for RNA-mediated gene silencing (RNAi) by the RNA-induced silencing complex (RISC). The 'minimal RISC' appears to include ago2 bound to a short guide RNA such as a microRNA (miRNA) or short interfering RNA (siRNA). These guide RNAs direct RISC to complementary mRNAs that are targets for RISC-mediated gene silencing. The precise mechanism of gene silencing depends on the degree of complementarity between the miRNA or siRNA and its target. Binding of RISC to a perfectly complementary mRNA generally results in silencing due to endonucleolytic cleavage of the mRNA specifically by ago2. Binding of RISC to a partially complementary mRNA results in silencing through inhibition of translation, and this is independent of endonuclease activity. The inhibition of translational initiation leads to the accumulation of the affected mRNA in cytoplasmic processing bodies (P-bodies), where mRNA degradation may subsequently occur. The protein is Protein argonaute-2 (ago2) of Xenopus laevis (African clawed frog).